The chain runs to 183 residues: Oligoribonuclease (183 aa).

Positions 9–172 constitute an Exonuclease domain; sequence LIWIDLEMTG…DDIRESIEEL (164 aa). Residue Tyr130 is part of the active site.

This sequence belongs to the oligoribonuclease family.

Its subcellular location is the cytoplasm. Functionally, 3'-to-5' exoribonuclease specific for small oligoribonucleotides. The polypeptide is Oligoribonuclease (Haemophilus ducreyi (strain 35000HP / ATCC 700724)).